The chain runs to 256 residues: Non-homologous end joining protein Ku 2 (256 aa).

One can recognise a Ku domain in the interval 13-184; it reads FADTDVAVKL…SLELQESPVS (172 aa).

The protein belongs to the prokaryotic Ku family. In terms of assembly, homodimer. Interacts with LigD.

With LigD forms a non-homologous end joining (NHEJ) DNA repair enzyme, which repairs dsDNA breaks with reduced fidelity. Binds linear dsDNA with 5'- and 3'- overhangs but not closed circular dsDNA nor ssDNA. Recruits and stimulates the ligase activity of LigD. The chain is Non-homologous end joining protein Ku 2 from Geotalea uraniireducens (strain Rf4) (Geobacter uraniireducens).